The chain runs to 152 residues: Acyl carrier protein, mitochondrial (152 aa).

A Carrier domain is found at 73–148 (KLINERVLLV…DIIKYVADKE (76 aa)). An O-(pantetheine 4'-phosphoryl)serine modification is found at Ser108.

This sequence belongs to the acyl carrier protein (ACP) family. Complex I is composed of about 45 different subunits.

Its subcellular location is the mitochondrion. Carrier of the growing fatty acid chain in fatty acid biosynthesis. Accessory and non-catalytic subunit of the mitochondrial membrane respiratory chain NADH dehydrogenase (Complex I), which functions in the transfer of electrons from NADH to the respiratory chain. The protein is Acyl carrier protein, mitochondrial of Drosophila melanogaster (Fruit fly).